The chain runs to 715 residues: Nucleolar complex protein 2 homolog (715 aa).

Disordered stretches follow at residues 17–71, 85–132, and 638–715; these read SKRI…HKLD, FLQQ…DKTK, and ERSA…SDED. Residues 89 to 128 show a composition bias toward acidic residues; it reads EDADLLNMEDDGDDDEDDDEDDEDEEEEESDDDEDDEEDD. The span at 638-660 shows a compositional bias: basic and acidic residues; that stretch reads ERSAVENSKKDDKKKKKEEEAAA.

It belongs to the NOC2 family.

Its subcellular location is the nucleus. In terms of biological role, required for normal somatic gonad development and for regulation of germline development and proliferation. This is Nucleolar complex protein 2 homolog (pro-2) from Caenorhabditis elegans.